A 181-amino-acid chain; its full sequence is MRIVLLGPPGAGKGTQAQKLAEKLGIPQISTGDLFRYNISNGTELGLEAKKYLDAGDLVPATLTNALVDDRLDDEDAAAGFILDGYPRSVEQAKALDEMLKKRDLSLDAVLEFRVPEEELVSRLKGRGRDDDTEDVIRNRFRVYRDETAPLLDYYSADLKTVDAVGELDEVFARALKALGR.

10 to 15 serves as a coordination point for ATP; sequence GAGKGT. Residues 30 to 59 are NMP; the sequence is STGDLFRYNISNGTELGLEAKKYLDAGDLV. AMP contacts are provided by residues T31, R36, 57–59, 85–88, and Q92; these read DLV and GYPR. The segment at 126-132 is LID; that stretch reads GRGRDDD. R127 lines the ATP pocket. Positions 129 and 140 each coordinate AMP. G166 is an ATP binding site.

The protein belongs to the adenylate kinase family. As to quaternary structure, monomer.

The protein localises to the cytoplasm. The enzyme catalyses AMP + ATP = 2 ADP. Its pathway is purine metabolism; AMP biosynthesis via salvage pathway; AMP from ADP: step 1/1. In terms of biological role, catalyzes the reversible transfer of the terminal phosphate group between ATP and AMP. Plays an important role in cellular energy homeostasis and in adenine nucleotide metabolism. This Mycolicibacterium vanbaalenii (strain DSM 7251 / JCM 13017 / BCRC 16820 / KCTC 9966 / NRRL B-24157 / PYR-1) (Mycobacterium vanbaalenii) protein is Adenylate kinase.